The primary structure comprises 697 residues: Probable potassium transporter 4 (697 aa).

The Cytoplasmic segment spans residues 1–29 (MSSSHTVTVSMDVEAGQKNKDKKGISQDL). A helical membrane pass occupies residues 30-50 (ILAYKTLGVVFGGLVTSPLYV). The Extracellular segment spans residues 51–66 (YPSMNLTNPTEEDYLG). Asn-55 carries an N-linked (GlcNAc...) asparagine glycan. A helical transmembrane segment spans residues 67-87 (IYSIMFWTLTLIGVVKYICIA). Residues 88–152 (LNADDHGEGG…FIESSIIARR (65 aa)) are Cytoplasmic-facing. Residues 153–173 (LLLLTAILGMCMLIGDGILTP) traverse the membrane as a helical segment. At 174–189 (AISVLSAIDGLRGPFP) the chain is on the extracellular side. Residues 190–210 (SVSKPAVEGLSAAILVGLFLL) form a helical membrane-spanning segment. Topologically, residues 211–217 (QKYGTSK) are cytoplasmic. A helical membrane pass occupies residues 218 to 238 (VSFMFSPIMAAWTFATPVIGV). The Extracellular portion of the chain corresponds to 239–271 (YSIWRYYPGIFKAMSPHYIVRFFMTNQTRGWQL). The N-linked (GlcNAc...) asparagine glycan is linked to Asn-264. A helical transmembrane segment spans residues 272-292 (LGGTVLCITGAEAMFADLGHF). Over 293–300 (SKRSIQIA) the chain is Cytoplasmic. Residues 301–321 (FMSSIYPSLVLTYAGQTAYLI) form a helical membrane-spanning segment. Residues 322-338 (NNVDDFSDGFYKFVPRP) are Extracellular-facing. Residues 339–359 (VYWPMFIIATLAAIVASQSLI) form a helical membrane-spanning segment. Topologically, residues 360–390 (SATFSVIKQSVVLDYFPRVKVVHTSKDKEGE) are cytoplasmic. Residues 391–411 (VYSPETNYMLMLLCVGVILGF) form a helical membrane-spanning segment. The Extracellular portion of the chain corresponds to 412–422 (GDGKDIGNAFG). A helical transmembrane segment spans residues 423 to 443 (VVVILVMLITTILLTLVMLII). Residues 444 to 447 (WGTH) lie on the Cytoplasmic side of the membrane. The chain crosses the membrane as a helical span at residues 448–468 (VVLVALYLVPFLLLEATYVSA). The Extracellular portion of the chain corresponds to 469–475 (VCTKILR). Residues 476–496 (GGWVPFAVSVALAAVMFGWYY) traverse the membrane as a helical segment. The Cytoplasmic segment spans residues 497–697 (GRQRKTEYEA…RVEIGMLYKA (201 aa)).

Belongs to the HAK/KUP transporter (TC 2.A.72.3) family.

It localises to the membrane. Its function is as follows. High-affinity potassium transporter. The protein is Probable potassium transporter 4 (HAK4) of Oryza sativa subsp. japonica (Rice).